The following is a 445-amino-acid chain: C-terminal-binding protein 2 (445 aa).

Asymmetric dimethylarginine is present on Arg-22. Residues Ser-106, Ile-186–Thr-191, Asp-210, Cys-243–Asn-249, Ala-270–Arg-272, and Asp-296 each bind NAD(+). The active site involves Arg-272. Glu-301 is an active-site residue. His-321 serves as the catalytic Proton donor. Residue His-321 to Trp-324 participates in NAD(+) binding. Residues Thr-414–Gln-445 are disordered. At Ser-428 the chain carries Phosphoserine. Positions Lys-434–Gln-445 are enriched in basic and acidic residues.

It belongs to the D-isomer specific 2-hydroxyacid dehydrogenase family. In terms of assembly, can form homodimers or heterodimers of CTBP1 and CTBP2. Interacts with HIPK2 and ZNF217. Interacts with PRDM16; represses white adipose tissue (WAT)-specific genes expression. Interacts with PNN, NRIP1 and WIZ. Interacts with MCRIP1. (Microbial infection) Interacts with human adenovirus 5 E1A protein; this interaction seems to potentiate viral replication. Ubiquitous. Highest levels in heart, skeletal muscle, and pancreas.

It is found in the nucleus. It localises to the synapse. Corepressor targeting diverse transcription regulators. Functions in brown adipose tissue (BAT) differentiation. In terms of biological role, isoform 2 probably acts as a scaffold for specialized synapses. The protein is C-terminal-binding protein 2 (CTBP2) of Homo sapiens (Human).